A 714-amino-acid chain; its full sequence is A-kinase anchor protein 5 (714 aa).

Disordered regions lie at residues 1–146 (METS…GYVR) and 243–333 (VLEN…VGHT). Residues 1 to 164 (METSVSEIQI…EIKAQIQPDE (164 aa)) are essential to the intracellular anchoring function. Residues S4 and S22 each carry the phosphoserine modification. The span at 10–32 (IETKDEKRPEAASPQKERQERKT) shows a compositional bias: basic and acidic residues. C36 carries the S-palmitoyl cysteine lipid modification. Residues 37–50 (FKRRKKVNKKKAKA) are compositionally biased toward basic residues. 2 stretches are compositionally biased toward basic and acidic residues: residues 54–63 (TAEETEKHAP) and 88–100 (KPSESAEKQKPSE). Residues 74-94 (AGAWASIKRLVTHRKPSESAE) carry the AKAP CaM-binding motif. C123 carries S-palmitoyl cysteine lipidation. Residues 243–268 (VLENSAADSPQPVTSTAPLSPATTHQ) show a composition bias toward polar residues. Residues 285–301 (GKDDGRRKTAAEEKKSG) show a composition bias toward basic and acidic residues. The stretch at 305-312 (LGQAEEAS) is one 1; approximate repeat. The segment at 305 to 597 (LGQAEEASSV…PIVGQAEETV (293 aa)) is 28 X 8 AA repeats of V-G-Q-A-E-E-A-T. Over residues 310–323 (EASSVSQADKSVLS) the composition is skewed to polar residues. The stretch at 322 to 329 (LSQAEEAT) is one 2; approximate repeat. The 3; approximate repeat unit spans residues 330 to 337 (VGHTEEAT). Residues 350 to 357 (LSQAEEAT) form a 4; approximate repeat. The 5; approximate repeat unit spans residues 358–365 (VAQAKETV). Residues 366-373 (LSQAEEVK) form a 6; approximate repeat. The stretch at 398–405 (VSQAEEAI) is one 7; approximate repeat. The stretch at 414–421 (MGQAEEAT) is one 8; approximate repeat. 5 repeat units span residues 430–437 (VGQAEEAT), 438–445 (VGQAEEAT), 446–453 (VGQAEEAT), 454–461 (VGQAEEAT), and 462–469 (VGQAEEAT). The 14; approximate repeat unit spans residues 470–477 (VGQAGEAT). A 15; approximate repeat occupies 486-493 (VGQAEEAI). 4 consecutive repeat copies span residues 494-501 (VGQAEEAT), 502-509 (VGQAEEAT), 510-517 (VGQAEEAT), and 518-525 (VGQAEEAT). Residues 526–533 (VDQAEEAT) form a 20; approximate repeat. Repeat unit 21 spans residues 534–541 (VGQAEEAT). A 22; approximate repeat occupies 542–549 (VGQAGEAA). Residues 550 to 557 (VGQAEEAI) form a 23; approximate repeat. The stretch at 558–565 (VAQAEEAT) is one 24; approximate repeat. The stretch at 566 to 573 (VGQAGEAT) is repeat 25. The stretch at 574-581 (VGQAEKAT) is one 26; approximate repeat. The stretch at 582–589 (VGQAEEPI) is one 27; approximate repeat. The 28; approximate repeat unit spans residues 590–597 (VGQAEETV). The RII-beta subunit binding domain stretch occupies residues 675-696 (YETLLIETASSLVKNAIELSVE). The tract at residues 697-714 (QLVNEMVSEDNQINTLFQ) is tethers NFATC2 to CRAC channels.

Binding protein for dimer of the RII-beta regulatory subunit of cAMP-dependent protein kinase (PKA) and also for the protein kinase C (PKC) and the phosphatase calcineurin (PP2B). Each enzyme is inhibited when bound to the anchoring protein. Also binds the beta2-adrenergic receptor. Part of a complex containing AKAP5, ADCY5, ADCY6 and PDE4C. Interacts with ADCY8, and enhances its phosphorylation at lipid rafts. Interacts with ORAI1 (isoform alpha) (via N-terminus) upon store depletion and in response to LTC4. Does not interact with ORAI2 and ORAI3 paralogs. Interacts (via leucine zipper domain) with NFATC2/NFAT1. Interacts with calmodulin; the interaction is calcium-independent. Interacts with KCNQ2; the interaction may help KCNQ2 channel complex to retain calcium-bound calmodulin. Interacts with KCNK2; the channel is recruited to postsynaptic microdomains by AKAP5 where it can integrate neurotransmitter receptor signals. Part of a complex composed of AKAP5 and ADRB2. In terms of processing, palmitoylated. Palmitoylation at Cys-36 and Cys-123 plays a key role in the targeting of AKAP5 to lipid rafts. Palmitoylation by ZDHHC2 is required for AKAP5 function in LTP-stimulated recycling endosome exocytosis.

It localises to the postsynaptic recycling endosome membrane. Its subcellular location is the cell projection. It is found in the dendrite. The protein localises to the postsynaptic cell membrane. Multivalent scaffold protein that anchors the cAMP-dependent protein kinase/PKA to cytoskeletal and/or organelle-associated proteins, targeting the signal carried by cAMP to specific intracellular effectors. Association with the beta2-adrenergic receptor (beta2-AR) not only regulates beta2-AR signaling pathway, but also the activation by PKA by switching off the beta2-AR signaling cascade. Plays a role in long term synaptic potentiation by regulating protein trafficking from the dendritic recycling endosomes to the plasma membrane and controlling both structural and functional plasticity at excitatory synapses. In hippocampal pyramidal neurons, recruits KCNK2/TREK-1 channel at postsynaptic dense bodies microdomains and converts it to a leak channel no longer sensitive to stimulation by arachidonic acid, acidic pH or mechanical stress, nor inhibited by Gq-coupled receptors but still under the negative control of Gs-coupled receptors. Associates with ORAI1 pore-forming subunit of CRAC channels in Ca(2+) signaling microdomains where it recruits NFATC2/NFAT1 and couples store-operated Ca(2+) influx to calmodulin and calcineurin signaling and activation of NFAT-dependent transcriptional responses. This is A-kinase anchor protein 5 (Akap5) from Rattus norvegicus (Rat).